Consider the following 153-residue polypeptide: Cell division protein SepF (153 aa).

This sequence belongs to the SepF family. Homodimer. Interacts with FtsZ.

It localises to the cytoplasm. In terms of biological role, cell division protein that is part of the divisome complex and is recruited early to the Z-ring. Probably stimulates Z-ring formation, perhaps through the cross-linking of FtsZ protofilaments. Its function overlaps with FtsA. The sequence is that of Cell division protein SepF from Clostridium novyi (strain NT).